The chain runs to 258 residues: Imidazole glycerol phosphate synthase subunit HisF (258 aa).

Active-site residues include Asp11 and Asp130.

The protein belongs to the HisA/HisF family. In terms of assembly, heterodimer of HisH and HisF.

Its subcellular location is the cytoplasm. The enzyme catalyses 5-[(5-phospho-1-deoxy-D-ribulos-1-ylimino)methylamino]-1-(5-phospho-beta-D-ribosyl)imidazole-4-carboxamide + L-glutamine = D-erythro-1-(imidazol-4-yl)glycerol 3-phosphate + 5-amino-1-(5-phospho-beta-D-ribosyl)imidazole-4-carboxamide + L-glutamate + H(+). The protein operates within amino-acid biosynthesis; L-histidine biosynthesis; L-histidine from 5-phospho-alpha-D-ribose 1-diphosphate: step 5/9. IGPS catalyzes the conversion of PRFAR and glutamine to IGP, AICAR and glutamate. The HisF subunit catalyzes the cyclization activity that produces IGP and AICAR from PRFAR using the ammonia provided by the HisH subunit. This chain is Imidazole glycerol phosphate synthase subunit HisF, found in Nitrobacter winogradskyi (strain ATCC 25391 / DSM 10237 / CIP 104748 / NCIMB 11846 / Nb-255).